A 351-amino-acid chain; its full sequence is Soluble interferon alpha/beta receptor OPG204 (351 aa).

The N-terminal stretch at 1–19 (MTMKMMVHIYFVSLLLLLF) is a signal peptide. Ig-like C2-type domains are found at residues 65-147 (LGEP…RSHI) and 155-237 (PKTY…IVVS). 2 disulfide bridges follow: Cys-73-Cys-129 and Cys-172-Cys-221. Asn-117, Asn-182, Asn-261, Asn-269, and Asn-321 each carry an N-linked (GlcNAc...) asparagine; by host glycan. An Ig-like V-type domain is found at 246 to 345 (PSQDHRFKLI…HNYYFEKTLT (100 aa)). Cys-272 and Cys-333 are joined by a disulfide.

Belongs to the interleukin-1 receptor family. As to quaternary structure, interacts with host IFNA1.

Its subcellular location is the secreted. Functionally, counteracts the antiviral effects of host IFN-alpha/beta and key IFN-inducible proteins involved in viral RNA degradation suxh as host OAS1. Acts as a soluble IFN-alpha receptor and thus inhibits the interaction between host IFN-alpha and its receptor. The protein is Soluble interferon alpha/beta receptor OPG204 (OPG204) of Vaccinia virus (strain Western Reserve) (VACV).